The sequence spans 263 residues: Nitrogenase iron protein 2 (263 aa).

9-16 (GKGGIGKS) is a binding site for ATP. Cysteine 92 lines the [4Fe-4S] cluster pocket. At arginine 95 the chain carries ADP-ribosylarginine; by dinitrogenase reductase ADP-ribosyltransferase. Cysteine 127 contacts [4Fe-4S] cluster.

The protein belongs to the NifH/BchL/ChlL family. In terms of assembly, homodimer. It depends on [4Fe-4S] cluster as a cofactor. The reversible ADP-ribosylation of Arg-95 inactivates the nitrogenase reductase and regulates nitrogenase activity.

It catalyses the reaction N2 + 8 reduced [2Fe-2S]-[ferredoxin] + 16 ATP + 16 H2O = H2 + 8 oxidized [2Fe-2S]-[ferredoxin] + 2 NH4(+) + 16 ADP + 16 phosphate + 6 H(+). In terms of biological role, the key enzymatic reactions in nitrogen fixation are catalyzed by the nitrogenase complex, which has 2 components: the iron protein and the molybdenum-iron protein. The polypeptide is Nitrogenase iron protein 2 (nifH2) (Methanobacterium ivanovii).